Here is a 191-residue protein sequence, read N- to C-terminus: Calcium and integrin-binding protein 1 (191 aa).

Residue Gly-2 is the site of N-myristoyl glycine attachment. EF-hand domains lie at Thr-103 to Glu-138 and Glu-148 to Phe-183. Positions 116, 118, 120, 122, 127, 161, 163, 165, 167, and 172 each coordinate Ca(2+).

Monomer. Interacts with the heterodimeric integrin alpha-IIb/beta3 (ITGA2B-ITGB3). Interacts with ITGA2B (via cytoplasmic domain); the interaction is direct and calcium-dependent. Interacts with the protein kinases PLK2/SNK and PRKDC (via the region immediately upstream of the kinase domain). Interacts with PLK3; the interaction inhibits PLK3 kinase activity. Interacts with PSEN2. Interacts (via C-terminus) with F8. Interacts with NBR1 (via C-terminus). Interacts with FEZ1 (via C-terminus). Interacts with UBR5 (via C-terminus); the interaction is sensitive to DNA damage, and may target CIB1 for ubiquitin-mediated degradation. Interacts with IFI6; the interaction is direct. Interacts with BCL2. Interacts with TAS1R2 (via C-terminus); the interaction is independent of the myristoylation state of CIB1. Interacts with ITPR3; the interaction occurs in a calcium dependent manner. Interacts with PTK2/FAK1. Interacts with MAP3K5; the interaction inhibits MAP3K5 activation by phosphorylation, and its subsequent interaction with TRAF2. Interacts (via C-terminal region) with STMN2 (via the N-terminal region); the interaction is direct, occurs in a calcium-dependent manner and attenuates the STMN2-induced neurite outgrowth inhibition. Interacts with SPHK1, the interaction occurs in a calcium-dependent manner. Interacts with ITGA2B (via C-terminal cytoplasmic tail); the interaction occurs upon platelet aggregation and is stabilized/increased in a calcium and magnesium-dependent manner. Interacts with PAK1 (via N-terminal region); the interaction is direct and occurs in a calcium-dependent manner. Interacts with RAC3 (via C-terminal region); the interaction induces their association with the cytoskeleton upon alpha-IIb/beta3 integrin-mediated adhesion. Interacts with ITGA5 and ITGAV. Interacts with MYO1C. Interacts with ITGA2B (via C-terminal cytoplasmic tail region). Interacts (via C-terminal region) with PPP3R1 isoform 1 and isoform 2; the interactions increase upon cardiomyocytes hypertrophy. Interacts with CACNA1C; the interaction increases upon cardiomyocytes hypertrophy. Interacts and forms a complex with TMC6 and TMC8; the interaction stabilizes each component of the complex. As to expression, expressed strongly in Sertoli cells, weakly in pachytene spermatocytes, round spermatids and condensing spermatids (at protein level). Expressed in testis. Expressed in cardiac myocytes and endothelial cells. Expressed in heart, liver, spleen, lung, kidney, brain and inner ear. In the inner ear, expressed in the vestibule, basilar membrane and spiral ganglion cells.

The protein resides in the membrane. It is found in the cell membrane. The protein localises to the sarcolemma. Its subcellular location is the apical cell membrane. It localises to the cell projection. The protein resides in the ruffle membrane. It is found in the filopodium tip. The protein localises to the growth cone. Its subcellular location is the lamellipodium. It localises to the cytoplasm. The protein resides in the cytoskeleton. It is found in the microtubule organizing center. The protein localises to the centrosome. Its subcellular location is the perinuclear region. It localises to the nucleus. The protein resides in the neuron projection. It is found in the perikaryon. In terms of biological role, calcium-binding protein that plays a role in the regulation of numerous cellular processes, such as cell differentiation, cell division, cell proliferation, cell migration, thrombosis, angiogenesis, cardiac hypertrophy and apoptosis. Involved in bone marrow megakaryocyte differentiation by negatively regulating thrombopoietin-mediated signaling pathway. Participates in the endomitotic cell cycle of megakaryocyte, a form of mitosis in which both karyokinesis and cytokinesis are interrupted. Plays a role in integrin signaling by negatively regulating alpha-IIb/beta3 activation in thrombin-stimulated megakaryocytes preventing platelet aggregation. Up-regulates PTK2/FAK1 activity, and is also needed for the recruitment of PTK2/FAK1 to focal adhesions; it thus appears to play an important role in focal adhesion formation. Positively regulates cell migration on fibronectin in a CDC42-dependent manner, the effect being negatively regulated by PAK1. Functions as a negative regulator of stress activated MAP kinase (MAPK) signaling pathways. Down-regulates inositol 1,4,5-trisphosphate receptor-dependent calcium signaling. Involved in sphingosine kinase SPHK1 translocation to the plasma membrane in a N-myristoylation-dependent manner preventing TNF-alpha-induced apoptosis. Regulates serine/threonine-protein kinase PLK3 activity for proper completion of cell division progression. Plays a role in microtubule (MT) dynamics during neuronal development; disrupts the MT depolymerization activity of STMN2 attenuating NGF-induced neurite outgrowth and the MT reorganization at the edge of lamellipodia. Promotes cardiomyocyte hypertrophy via activation of the calcineurin/NFAT signaling pathway. Stimulates calcineurin PPP3R1 activity by mediating its anchoring to the sarcolemma. In ischemia-induced (pathological or adaptive) angiogenesis, stimulates endothelial cell proliferation, migration and microvessel formation by activating the PAK1 and ERK1/ERK2 signaling pathway. Also promotes cancer cell survival and proliferation. May regulate cell cycle and differentiation of spermatogenic germ cells, and/or differentiation of supporting Sertoli cells. Forms a complex with TMC6/EVER1 and TMC8/EVER2 in lymphocytes and keratynocytes where CIB1 stabilizes TMC6 and TMC8 levels and reciprocally. This is Calcium and integrin-binding protein 1 (Cib1) from Mus musculus (Mouse).